A 1309-amino-acid chain; its full sequence is Tetratricopeptide repeat protein 41 (1309 aa).

TPR repeat units follow at residues 399–432 (PQLE…KPCI), 651–684 (WIQE…SVRE), 817–851 (LTFL…SVQS), 859–892 (LKAQ…LLRF), 989–1024 (MSYF…KEKA), and 1042–1079 (SDTL…RAAH).

The protein localises to the cytoplasm. In Rattus norvegicus (Rat), this protein is Tetratricopeptide repeat protein 41.